Consider the following 428-residue polypeptide: Tubby-like F-box protein 5 (428 aa).

The interval 17-65 is disordered; it reads IGSMSRRAADGRAGGGRGGSRHSWPVLWSEQQQPPQQQQLQRQEHQQQQ. The segment covering 47–65 has biased composition (low complexity); the sequence is QQQPPQQQQLQRQEHQQQQ. Positions 65 to 117 constitute an F-box domain; the sequence is QGRWANLPPELLLDVIQRVEASEATWPARRQVVACAAVCRSWREVTKEVVKTL.

Belongs to the TUB family. In terms of tissue distribution, ubiquitous.

In Oryza sativa subsp. japonica (Rice), this protein is Tubby-like F-box protein 5 (TULP5).